Consider the following 204-residue polypeptide: Leucyl/phenylalanyl-tRNA--protein transferase (204 aa).

This sequence belongs to the L/F-transferase family.

It is found in the cytoplasm. It catalyses the reaction N-terminal L-lysyl-[protein] + L-leucyl-tRNA(Leu) = N-terminal L-leucyl-L-lysyl-[protein] + tRNA(Leu) + H(+). The enzyme catalyses N-terminal L-arginyl-[protein] + L-leucyl-tRNA(Leu) = N-terminal L-leucyl-L-arginyl-[protein] + tRNA(Leu) + H(+). It carries out the reaction L-phenylalanyl-tRNA(Phe) + an N-terminal L-alpha-aminoacyl-[protein] = an N-terminal L-phenylalanyl-L-alpha-aminoacyl-[protein] + tRNA(Phe). Its function is as follows. Functions in the N-end rule pathway of protein degradation where it conjugates Leu, Phe and, less efficiently, Met from aminoacyl-tRNAs to the N-termini of proteins containing an N-terminal arginine or lysine. The sequence is that of Leucyl/phenylalanyl-tRNA--protein transferase from Rhizobium etli (strain ATCC 51251 / DSM 11541 / JCM 21823 / NBRC 15573 / CFN 42).